We begin with the raw amino-acid sequence, 842 residues long: Alpha-glucan phosphorylase, H isozyme (842 aa).

Lys-688 is subject to N6-(pyridoxal phosphate)lysine.

It belongs to the glycogen phosphorylase family. The cofactor is pyridoxal 5'-phosphate.

It localises to the cytoplasm. The catalysed reaction is [(1-&gt;4)-alpha-D-glucosyl](n) + phosphate = [(1-&gt;4)-alpha-D-glucosyl](n-1) + alpha-D-glucose 1-phosphate. Functionally, phosphorylase is an important allosteric enzyme in carbohydrate metabolism. Enzymes from different sources differ in their regulatory mechanisms and in their natural substrates. However, all known phosphorylases share catalytic and structural properties. Its function is as follows. The H isoform exhibits higher affinity for branched polyglucans such as soluble starch or glycogen. This Vicia faba (Broad bean) protein is Alpha-glucan phosphorylase, H isozyme.